The primary structure comprises 633 residues: Probable extracellular metalloproteinase 3 (633 aa).

A signal peptide spans 1 to 18; it reads MHGLLLAGLLALPMNVLA. The propeptide occupies 19-246; sequence HPAEQHASNV…VHNVVDYVAS (228 aa). Residue Asn-410 is glycosylated (N-linked (GlcNAc...) asparagine). His-429 is a Zn(2+) binding site. The active site involves Glu-430. Residue His-433 participates in Zn(2+) binding. Asn-480 and Asn-622 each carry an N-linked (GlcNAc...) asparagine glycan.

It belongs to the peptidase M36 family. Zn(2+) is required as a cofactor.

It localises to the secreted. Secreted metalloproteinase probably acting as a virulence factor. The chain is Probable extracellular metalloproteinase 3 (MEP3) from Trichophyton verrucosum (strain HKI 0517).